The primary structure comprises 89 residues: MSITAERKAALIKEYATVEGDTGSPEVQVAILTERINNLTDHFKDHKKDNHSRRGLLTMVSSRRSLLDYLKKKDEGRYSKLIGSLGIRR.

The protein belongs to the universal ribosomal protein uS15 family. As to quaternary structure, part of the 30S ribosomal subunit. Forms a bridge to the 50S subunit in the 70S ribosome, contacting the 23S rRNA.

Its function is as follows. One of the primary rRNA binding proteins, it binds directly to 16S rRNA where it helps nucleate assembly of the platform of the 30S subunit by binding and bridging several RNA helices of the 16S rRNA. Forms an intersubunit bridge (bridge B4) with the 23S rRNA of the 50S subunit in the ribosome. In Rhizobium rhizogenes (strain K84 / ATCC BAA-868) (Agrobacterium radiobacter), this protein is Small ribosomal subunit protein uS15.